We begin with the raw amino-acid sequence, 191 residues long: Apoptosis regulator BHRF1 (191 aa).

Residues 1–18 are interaction with host VRK2; the sequence is MAYSTREILLALCIRDSR. N-linked (GlcNAc...) asparagine; by host glycosylation occurs at Asn-22. Residues 89-109 carry the BH1 motif; the sequence is EIFHRGDPSLGRALAWMAWCM. The interaction with host VRK2 stretch occupies residues 89 to 142; sequence EIFHRGDPSLGRALAWMAWCMHACRTLCCNQSTPYYVVDLSVRGMLEASEGLDG. Residue Asn-118 is glycosylated (N-linked (GlcNAc...) asparagine; by host). The BH2 motif lies at 142-157; it reads GWIHQQGGWSTLIEDN. The helical transmembrane segment at 166-186 threads the bilayer; sequence WTLFLAGLTLSLLVICSYLFI.

It belongs to the Bcl-2 family. As to quaternary structure, interacts with isoform 1 of host VRK2; this interaction is involved in protecting cells from apoptosis. Interacts with host PRA1; this interaction seems to modulate BHRF1 anti-apoptotic activity. Interacts with host BCL2L11. Interacts with host BAD and BBC3. Interacts with BALF1; BALF1 acting as a negative regulator of the survival function of BHRF1. Interacts with host BECN1.

The protein resides in the host membrane. It localises to the host mitochondrion. Functionally, prevents premature death of the host cell during virus production, which would otherwise reduce the amount of progeny virus. Acts as a host B-cell leukemia/lymphoma 2 (Bcl-2) homolog, and interacts with pro-apoptotic proteins to prevent mitochondria permeabilization, release of cytochrome c and subsequent apoptosis of the host cell. In addition, plays a role in the inhibiton of host BECN1-mediated starvation-induced autophagy without affecting basal levels of autophagy. This Homo sapiens (Human) protein is Apoptosis regulator BHRF1.